We begin with the raw amino-acid sequence, 704 residues long: Phosphatidylinositol-3,5-bisphosphate 3-phosphatase MTMR8 (704 aa).

Positions Gly126–Tyr500 constitute a Myotubularin phosphatase domain. A 1,2-diacyl-sn-glycero-3-phospho-(1D-myo-inositol-3,5-bisphosphate)-binding residues include Asn250, Asn275, and Ile276. A 1,2-diacyl-sn-glycero-3-phospho-(1D-myo-inositol-3-phosphate) is bound by residues Asn250, Asn275, and Ile276. The active-site Phosphocysteine intermediate is the Cys338. Positions 339, 340, 341, 342, 343, 344, 380, and 384 each coordinate a 1,2-diacyl-sn-glycero-3-phospho-(1D-myo-inositol-3,5-bisphosphate). A 1,2-diacyl-sn-glycero-3-phospho-(1D-myo-inositol-3-phosphate) is bound by residues Ser339, Asp340, Gly341, Trp342, Asp343, and Arg344. The phosphate site is built by Ser339 and Asp340. Residues Trp342, Asp343, and Arg344 each contribute to the phosphate site. Arg384 provides a ligand contact to a 1,2-diacyl-sn-glycero-3-phospho-(1D-myo-inositol-3-phosphate). Residues Glu515 to Arg541 are a coiled coil.

It belongs to the protein-tyrosine phosphatase family. Non-receptor class myotubularin subfamily. In terms of assembly, homodimer. Heterodimer with MTMR9.

The protein localises to the nucleus envelope. It catalyses the reaction a 1,2-diacyl-sn-glycero-3-phospho-(1D-myo-inositol-3,5-bisphosphate) + H2O = a 1,2-diacyl-sn-glycero-3-phospho-(1D-myo-inositol-5-phosphate) + phosphate. The enzyme catalyses a 1,2-diacyl-sn-glycero-3-phospho-(1D-myo-inositol-3-phosphate) + H2O = a 1,2-diacyl-sn-glycero-3-phospho-(1D-myo-inositol) + phosphate. The catalysed reaction is 1,2-dioctanoyl-sn-glycero-3-phospho-(1D-myo-inositol-3,5-bisphosphate) + H2O = 1,2-dioctanoyl-sn-glycero-3-phospho-(1D-myo-inositol-5-phosphate) + phosphate. Interaction with MTMR9 increases phosphatase activity. In terms of biological role, lipid phosphatase that specifically dephosphorylates the D-3 position of phosphatidylinositol 3-phosphate and phosphatidylinositol 3,5-bisphosphate, generating phosphatidylinositol and phosphatidylinositol 5-phosphate. In complex with MTMR9, negatively regulates autophagy. In Homo sapiens (Human), this protein is Phosphatidylinositol-3,5-bisphosphate 3-phosphatase MTMR8.